A 353-amino-acid chain; its full sequence is Melatonin receptor type 1A (353 aa).

Over residues 1-15 (MKGNGSTLLNASQQA) the composition is skewed to polar residues. Residues 1–23 (MKGNGSTLLNASQQAPGVGEGGG) are disordered. Residues 1-32 (MKGNGSTLLNASQQAPGVGEGGGPRPSWLAST) lie on the Extracellular side of the membrane. Asparagine 4 and asparagine 10 each carry an N-linked (GlcNAc...) asparagine glycan. The helical transmembrane segment at 33 to 53 (LAFILIFTIVVDILGNLLVIL) threads the bilayer. At 54 to 66 (SVYRNKKLRNAGN) the chain is on the cytoplasmic side. A helical membrane pass occupies residues 67-87 (IFVVSLAIADLVVAIYPYPLV). Over 88 to 105 (LTSIFNNGWNLGYLHCQI) the chain is Extracellular. Residues cysteine 103 and cysteine 180 are joined by a disulfide bond. Residues 106-126 (SAFLMGLSVIGSIFNITGIAI) form a helical membrane-spanning segment. Residues 127-147 (NRYCYICHSLKYDRLYSNKNS) lie on the Cytoplasmic side of the membrane. Residues 148-168 (LCYVFLIWVLTLVAIMPNLQT) form a helical membrane-spanning segment. Topologically, residues 169 to 190 (GTLQYDPRIYSCTFTQSVSSAY) are extracellular. Residues 191-211 (TIAVVVFHFIVPMIIVIFCYL) form a helical membrane-spanning segment. The Cytoplasmic portion of the chain corresponds to 212-243 (RIWILVLQVRRRVKPDSKPRLKPQDFRNFVTM). Residues 244–264 (FVVFVLFAICWAPLNFIGLIV) traverse the membrane as a helical segment. Residues 265 to 277 (ASDPATMAPRIPE) are Extracellular-facing. Residues 278 to 298 (WLFVASYYMAYFNSCLNAIIY) traverse the membrane as a helical segment. The Cytoplasmic segment spans residues 299–353 (GLLNQNFRQEYKRILVSLFTAKMCFVDSSNDPADKIKCKPAPLIANNNLIKVDSV).

The protein belongs to the G-protein coupled receptor 1 family. As to expression, at least in the brain, more precisely in the pars tuberalis and the suprachiasmatic nucleus.

The protein resides in the cell membrane. In terms of biological role, high affinity receptor for melatonin. Likely to mediate the reproductive and circadian actions of melatonin. The activity of this receptor is mediated by pertussis toxin sensitive G proteins that inhibit adenylate cyclase activity. Possibly involved in sleep induction, by melatonin activation of the potassium channel KCNMA1/BK and the dissociation of G-beta and G-gamma subunits, thereby decreasing synaptic transmission. In Phodopus sungorus (Striped hairy-footed hamster), this protein is Melatonin receptor type 1A (MTNR1A).